The chain runs to 614 residues: Chaperone protein HtpG (614 aa).

Residues Met-1 to Arg-324 form an a; substrate-binding region. The tract at residues Glu-325–Arg-537 is b. Residues Met-538 to Arg-614 form a c region.

This sequence belongs to the heat shock protein 90 family. In terms of assembly, homodimer.

It is found in the cytoplasm. Functionally, molecular chaperone. Has ATPase activity. The sequence is that of Chaperone protein HtpG from Desulfitobacterium hafniense (strain Y51).